The sequence spans 141 residues: ATP synthase epsilon chain (141 aa).

The protein belongs to the ATPase epsilon chain family. In terms of assembly, F-type ATPases have 2 components, CF(1) - the catalytic core - and CF(0) - the membrane proton channel. CF(1) has five subunits: alpha(3), beta(3), gamma(1), delta(1), epsilon(1). CF(0) has three main subunits: a, b and c.

The protein resides in the cell inner membrane. Its function is as follows. Produces ATP from ADP in the presence of a proton gradient across the membrane. The protein is ATP synthase epsilon chain of Pseudomonas aeruginosa (strain LESB58).